Reading from the N-terminus, the 144-residue chain is D-aminoacyl-tRNA deacylase (144 aa).

The short motif at 136 to 137 (GP) is the Gly-cisPro motif, important for rejection of L-amino acids element.

This sequence belongs to the DTD family. Homodimer.

It is found in the cytoplasm. It carries out the reaction glycyl-tRNA(Ala) + H2O = tRNA(Ala) + glycine + H(+). The catalysed reaction is a D-aminoacyl-tRNA + H2O = a tRNA + a D-alpha-amino acid + H(+). In terms of biological role, an aminoacyl-tRNA editing enzyme that deacylates mischarged D-aminoacyl-tRNAs. Also deacylates mischarged glycyl-tRNA(Ala), protecting cells against glycine mischarging by AlaRS. Acts via tRNA-based rather than protein-based catalysis; rejects L-amino acids rather than detecting D-amino acids in the active site. By recycling D-aminoacyl-tRNA to D-amino acids and free tRNA molecules, this enzyme counteracts the toxicity associated with the formation of D-aminoacyl-tRNA entities in vivo and helps enforce protein L-homochirality. The sequence is that of D-aminoacyl-tRNA deacylase from Haemophilus influenzae (strain 86-028NP).